The primary structure comprises 186 residues: MKTDAIELGVAKDSTPIGGANRGVSILDFILRLVALVGTLASAILMGTTNETLPFATQFIRFRAEYDDLPTFTFFVVANIVVSGYLLLSLPLSIVNIVRSTAKNRRIILIIFDTAMLALLTAGASAAAAIVYLAHKGNTRANWFAICQQFNSFCERISGSLIGSFVGVAVFILLILMSASALSRRN.

Over Met-1–Ser-25 the chain is Cytoplasmic. The chain crosses the membrane as a helical span at residues Ile-26–Met-46. The Extracellular segment spans residues Gly-47 to Thr-73. Asn-50 is a glycosylation site (N-linked (GlcNAc...) asparagine). A helical membrane pass occupies residues Phe-74 to Ile-94. The Cytoplasmic segment spans residues Val-95–Arg-106. The helical transmembrane segment at Ile-107–Ala-127 threads the bilayer. Topologically, residues Ala-128–Arg-156 are extracellular. The helical transmembrane segment at Ile-157 to Met-177 threads the bilayer. Over Ser-178–Asn-186 the chain is Cytoplasmic.

It belongs to the Casparian strip membrane proteins (CASP) family. Homodimer and heterodimers.

It localises to the cell membrane. Functionally, regulates membrane-cell wall junctions and localized cell wall deposition. Required for establishment of the Casparian strip membrane domain (CSD) and the subsequent formation of Casparian strips, a cell wall modification of the root endodermis that determines an apoplastic barrier between the intraorganismal apoplasm and the extraorganismal apoplasm and prevents lateral diffusion. The sequence is that of Casparian strip membrane protein 5 from Ricinus communis (Castor bean).